Reading from the N-terminus, the 566-residue chain is Alpha-N-acetylgalactosaminide alpha-2,6-sialyltransferase 1 (566 aa).

The Cytoplasmic segment spans residues 1-16; it reads MGFLIRRLPKDSRIFR. A helical; Signal-anchor for type II membrane protein transmembrane segment spans residues 17 to 37; the sequence is WLLILTVFSFIITSFSALFGM. Residues 38–566 are Lumenal-facing; it reads EKSIFRQLKI…ENIMKLYQRS (529 aa). Asn66 and Asn132 each carry an N-linked (GlcNAc...) asparagine glycan. The segment at 138-161 is disordered; the sequence is ASVVERTKEKTTARPVPGVGEADG. Asn192 carries an N-linked (GlcNAc...) asparagine glycan. The stretch at 247 to 254 is repeat 1; that stretch reads SSSPVSTC. A 2 X 8 AA repeats of S-S-S-X-V-S-T-C region spans residues 247–337; the sequence is SSSPVSTCSE…ANSSSNVSTC (91 aa). 2 disulfide bridges follow: Cys254–Cys337 and Cys340–Cys508. N-linked (GlcNAc...) asparagine glycosylation is found at Asn275, Asn286, Asn306, Asn329, and Asn333. Repeat 2 spans residues 330 to 337; sequence SSSNVSTC.

The protein belongs to the glycosyltransferase 29 family. As to expression, heart, kidney, testes, brain, liver and lung.

Its subcellular location is the golgi apparatus membrane. The enzyme catalyses a beta-D-galactosyl-(1-&gt;3)-N-acetyl-alpha-D-galactosaminyl derivative + CMP-N-acetyl-beta-neuraminate = a beta-D-galactosyl-(1-&gt;3)-[N-acetyl-alpha-neuraminyl-(2-&gt;6)]-N-acetyl-alpha-D-galactosaminyl derivative + CMP + H(+). It catalyses the reaction a 3-O-[N-acetyl-alpha-D-galactosaminyl]-L-seryl-[protein] + CMP-N-acetyl-beta-neuraminate = a 3-O-[N-acetyl-alpha-neuraminosyl-(2-&gt;6)-N-acetyl-alpha-D-galactosaminyl]-L-seryl-[protein] + CMP + H(+). The catalysed reaction is a 3-O-[N-acetyl-alpha-D-galactosaminyl]-L-threonyl-[protein] + CMP-N-acetyl-beta-neuraminate = a 3-O-[N-acetyl-alpha-neuraminosyl-(2-&gt;6)-N-acetyl-alpha-D-galactosaminyl]-L-threonyl-[protein] + CMP + H(+). It carries out the reaction a 3-O-[beta-D-galactosyl-(1-&gt;3)-N-acetyl-alpha-D-galactosaminyl]-L-seryl-[protein] + CMP-N-acetyl-beta-neuraminate = a 3-O-{beta-D-galactosyl-(1-&gt;3)-[N-acetyl-alpha-neuraminosyl-(2-&gt;6)]-N-acetyl-alpha-D-galactosaminyl}-L-seryl-[protein] + CMP + H(+). The enzyme catalyses a 3-O-[beta-D-galactosyl-(1-&gt;3)-N-acetyl-alpha-D-galactosaminyl]-L-threonyl-[protein] + CMP-N-acetyl-beta-neuraminate = a 3-O-{beta-D-galactosyl-(1-&gt;3)-[N-acetyl-alpha-neuraminosyl-(2-&gt;6)]-N-acetyl-alpha-D-galactosaminyl}-L-threonyl-[protein] + CMP + H(+). It catalyses the reaction a 3-O-[N-acetyl-alpha-neuraminyl-(2-&gt;3)-beta-D-galactosyl-(1-&gt;3)-N-acetyl-alpha-D-galactosaminyl]-L-threonyl-[protein] + CMP-N-acetyl-beta-neuraminate = a 3-O-{alpha-Neu5Ac-(2-&gt;3)-beta-D-Gal-(1-&gt;3)-[alpha-Neu5Ac-(2-&gt;6)]-alpha-D-GalNAc}-L-threonyl-[protein] + CMP + H(+). The protein operates within protein modification; protein glycosylation. In terms of biological role, protein sialyltransferase specifically expressed in goblet cells that plays a key role in intestinal host-commensal homeostasis. Conjugates sialic acid with an alpha-2-6 linkage to N-acetylgalactosamine (GalNAc) glycan chains linked to serine or threonine in glycoproteins. Generates sialylated T and Tn antigens.. The polypeptide is Alpha-N-acetylgalactosaminide alpha-2,6-sialyltransferase 1 (ST6GALNAC1) (Gallus gallus (Chicken)).